The sequence spans 400 residues: Glycerol-3-phosphate dehydrogenase [NAD(+)] 1 (400 aa).

NAD(+)-binding positions include 50-55, Phe-138, Lys-161, and Ala-194; that span reads GSGNWG. Lys-161 contacts substrate. The active-site Proton acceptor is Lys-254. Positions 319 and 348 each coordinate NAD(+). 319-320 contributes to the substrate binding site; the sequence is RN.

Belongs to the NAD-dependent glycerol-3-phosphate dehydrogenase family.

The enzyme catalyses sn-glycerol 3-phosphate + NAD(+) = dihydroxyacetone phosphate + NADH + H(+). This chain is Glycerol-3-phosphate dehydrogenase [NAD(+)] 1 (GPD1), found in Candida glabrata (strain ATCC 2001 / BCRC 20586 / JCM 3761 / NBRC 0622 / NRRL Y-65 / CBS 138) (Yeast).